The following is a 218-amino-acid chain: MSTLSPSVVISDDEPGYDLDLFCIPNHYAEDLEKVFIPHGLIMDRTERLARDVMKEMGGHHIVALCVLKGGYKFFADLLDYIKALNRNSDRSIPMTVDFIRLKSYCNDQSTGDIKVIGGDDLSTLTGKNVLIVEDIIDTGKTMQTLLSLVKQYSPKMVKVASLLVKRTSRSVGYRPDFVGFEIPDKFVVGYALDYNEHFRDLNHVCVISESGKAKYKA.

Lys-69 is a binding site for GMP. Lys-103 bears the N6-acetyllysine mark. A Glycyl lysine isopeptide (Lys-Gly) (interchain with G-Cter in SUMO1); alternate cross-link involves residue Lys-115. A Glycyl lysine isopeptide (Lys-Gly) (interchain with G-Cter in SUMO2); alternate cross-link involves residue Lys-115. GMP contacts are provided by residues 134–142 (EDIIDTGKT), Lys-166, 186–188 (KFV), and Asp-194. The Proton acceptor role is filled by Asp-138. At Thr-142 the chain carries Phosphothreonine. Asp-194 is a Mg(2+) binding site.

Belongs to the purine/pyrimidine phosphoribosyltransferase family. As to quaternary structure, homotetramer. Requires Mg(2+) as cofactor.

It localises to the cytoplasm. It carries out the reaction IMP + diphosphate = hypoxanthine + 5-phospho-alpha-D-ribose 1-diphosphate. The catalysed reaction is GMP + diphosphate = guanine + 5-phospho-alpha-D-ribose 1-diphosphate. Its pathway is purine metabolism; IMP biosynthesis via salvage pathway; IMP from hypoxanthine: step 1/1. In terms of biological role, converts guanine to guanosine monophosphate, and hypoxanthine to inosine monophosphate. Transfers the 5-phosphoribosyl group from 5-phosphoribosylpyrophosphate onto the purine. Plays a central role in the generation of purine nucleotides through the purine salvage pathway. This Rattus norvegicus (Rat) protein is Hypoxanthine-guanine phosphoribosyltransferase (Hprt1).